Consider the following 369-residue polypeptide: Cytochrome b561 and DOMON domain-containing protein At3g07570 (369 aa).

Positions 1–22 are cleaved as a signal peptide; it reads MKLYSVSIIIFVLIALSTIVNA. The DOMON domain maps to 55-167; sequence QNFILRYART…PRQSLLYAVG (113 aa). The Cytochrome b561 domain maps to 174-369; it reads SSPDFRLREH…GLEVRKFLKK (196 aa). Residues 212-232 traverse the membrane as a helical segment; the sequence is THGLMNMFGWGILIIVGAIVA. Heme b is bound by residues His-213 and His-246. Transmembrane regions (helical) follow at residues 247-267 and 279-299; these read IALQ…GLVL and HKGL…ALLA. Heme b contacts are provided by His-279 and His-315. Transmembrane regions (helical) follow at residues 321-341 and 343-363; these read LLII…KAGT and WNGG…GLEV.

It depends on heme b as a cofactor.

Its subcellular location is the membrane. Functionally, may act as a catecholamine-responsive trans-membrane electron transporter. The chain is Cytochrome b561 and DOMON domain-containing protein At3g07570 from Arabidopsis thaliana (Mouse-ear cress).